A 409-amino-acid polypeptide reads, in one-letter code: Glycoprotein 55 (409 aa).

The N-terminal stretch at Met1–Ser32 is a signal peptide. Over Val33–Thr384 the chain is Virion surface. N-linked (GlcNAc...) asparagine; by host glycosylation is found at Asn43 and Asn58. The disordered stretch occupies residues Pro232–Ala280. Residues Thr251–Gly263 show a composition bias toward pro residues. N-linked (GlcNAc...) asparagine; by host glycans are attached at residues Asn296 and Asn328. Residues Leu385–Trp405 traverse the membrane as a helical segment. At Thr406–Ser409 the chain is on the intravirion side.

Homooligomer. Forms heterooligomers with mouse EPOR, probably via their respective transmembrane domains. Forms covalent heterodimers with mouse MST1R isoform sf-Stk, probably via disulfide bonds.

It localises to the host endoplasmic reticulum membrane. It is found in the host cell membrane. The protein resides in the virion membrane. Functionally, this envelope-like membrane glycoprotein is responsible for ligand-independent activation of the erythropoietin receptor EPOR leading to the abnormally rapid proliferation of erythroid precursor cells. In the first stage of Friend disease, constitutive activation of EPOR by gp55 causes uncontrolled, polyclonal proliferation of infected erythroblasts, leading to polycythemia (massive increase in the number of mature red cells). Host susceptibility to SSFV-induced erythroblastosis depends on the expression of the truncated isoform of MST1R receptor tyrosine kinase (MST1R isoform sf-Stk). Interaction with SSFV gp 55 results in constitutive tyrosine phosphorylation and activation of MST1R isoform sf-Stk. The sequence is that of Glycoprotein 55 (env) from Mus musculus (Mouse).